We begin with the raw amino-acid sequence, 215 residues long: Large ribosomal subunit protein uL4 (215 aa).

The segment at 46–76 is disordered; it reads TAKSKNRAEVSGGGRKPWAQKGGGRARAGSI. Residues 56 to 71 are compositionally biased toward gly residues; that stretch reads SGGGRKPWAQKGGGRA.

This sequence belongs to the universal ribosomal protein uL4 family. Part of the 50S ribosomal subunit.

One of the primary rRNA binding proteins, this protein initially binds near the 5'-end of the 23S rRNA. It is important during the early stages of 50S assembly. It makes multiple contacts with different domains of the 23S rRNA in the assembled 50S subunit and ribosome. Functionally, forms part of the polypeptide exit tunnel. This Helicobacter pylori (strain HPAG1) protein is Large ribosomal subunit protein uL4.